A 214-amino-acid polypeptide reads, in one-letter code: MRIILLGAPGAGKGTQAQFIMEQYGIPQISTGDMLRAAVKAGTPLGLEAKKVMDAGQLVSDDLIIGLVKERIAQDDCAKGFLLDGFPRTIPQADAMAANGISIDHVIEIDVPDEEIVKRMSGRRVHPGSGRVYHVVFNPPKVEGKDDVTGEDLAIRPDDEEATVRKRLAIYHEQTKPLVEYYGKVAAAGQTKYNKFDGTQSVAAVSEQLASVLK.

10-15 (GAGKGT) is a binding site for ATP. Residues 30–59 (STGDMLRAAVKAGTPLGLEAKKVMDAGQLV) form an NMP region. Residues threonine 31, arginine 36, 57–59 (QLV), 85–88 (GFPR), and glutamine 92 contribute to the AMP site. The tract at residues 122–159 (GRRVHPGSGRVYHVVFNPPKVEGKDDVTGEDLAIRPDD) is LID. ATP-binding positions include arginine 123 and 132-133 (VY). Residues arginine 156 and arginine 167 each contribute to the AMP site. Glutamine 200 is an ATP binding site.

Belongs to the adenylate kinase family. In terms of assembly, monomer.

The protein localises to the cytoplasm. The enzyme catalyses AMP + ATP = 2 ADP. The protein operates within purine metabolism; AMP biosynthesis via salvage pathway; AMP from ADP: step 1/1. Functionally, catalyzes the reversible transfer of the terminal phosphate group between ATP and AMP. Plays an important role in cellular energy homeostasis and in adenine nucleotide metabolism. The sequence is that of Adenylate kinase from Shewanella putrefaciens (strain CN-32 / ATCC BAA-453).